The following is a 544-amino-acid chain: CTP synthase (544 aa).

Residues 1 to 265 form an amidoligase domain region; sequence MARFIFITGG…DKAVLSAFGL (265 aa). Ser13 contributes to the CTP binding site. Position 13 (Ser13) interacts with UTP. 14–19 contributes to the ATP binding site; sequence SLGKGL. An L-glutamine-binding site is contributed by Tyr54. Asp71 contacts ATP. Asp71 and Glu139 together coordinate Mg(2+). Residues 146–148, 186–191, and Lys222 contribute to the CTP site; these read DIE and KTKPTQ. UTP contacts are provided by residues 186–191 and Lys222; that span reads KTKPTQ. The 253-residue stretch at 291 to 543 folds into the Glutamine amidotransferase type-1 domain; that stretch reads TIGVVGKYVG…VAAALKQSRL (253 aa). Gly355 provides a ligand contact to L-glutamine. Cys382 functions as the Nucleophile; for glutamine hydrolysis in the catalytic mechanism. L-glutamine-binding positions include 383-386, Glu406, and Arg471; that span reads LGMQ. Residues His516 and Glu518 contribute to the active site.

This sequence belongs to the CTP synthase family. As to quaternary structure, homotetramer.

It carries out the reaction UTP + L-glutamine + ATP + H2O = CTP + L-glutamate + ADP + phosphate + 2 H(+). The enzyme catalyses L-glutamine + H2O = L-glutamate + NH4(+). The catalysed reaction is UTP + NH4(+) + ATP = CTP + ADP + phosphate + 2 H(+). Its pathway is pyrimidine metabolism; CTP biosynthesis via de novo pathway; CTP from UDP: step 2/2. Allosterically activated by GTP, when glutamine is the substrate; GTP has no effect on the reaction when ammonia is the substrate. The allosteric effector GTP functions by stabilizing the protein conformation that binds the tetrahedral intermediate(s) formed during glutamine hydrolysis. Inhibited by the product CTP, via allosteric rather than competitive inhibition. Its function is as follows. Catalyzes the ATP-dependent amination of UTP to CTP with either L-glutamine or ammonia as the source of nitrogen. Regulates intracellular CTP levels through interactions with the four ribonucleotide triphosphates. The sequence is that of CTP synthase from Zymomonas mobilis subsp. mobilis (strain ATCC 31821 / ZM4 / CP4).